The chain runs to 128 residues: Cytochrome c oxidase subunit 5B, mitochondrial (128 aa).

The N-terminal 30 residues, Met-1–Asn-30, are a transit peptide targeting the mitochondrion. Lys-67 and Lys-85 each carry N6-acetyllysine. Positions 90, 92, 112, and 115 each coordinate Zn(2+). N6-acetyllysine is present on Lys-120.

The protein belongs to the cytochrome c oxidase 5b family. In terms of tissue distribution, expressed in testis. Not expressed in brain, heart, liver, kidney, spleen, lung, duodenum, muscle, epididymis, vagina, uterus and ovary.

It is found in the mitochondrion inner membrane. This protein is one of the nuclear-coded polypeptide chains of cytochrome c oxidase, the terminal oxidase in mitochondrial electron transport. In Vulpes vulpes (Red fox), this protein is Cytochrome c oxidase subunit 5B, mitochondrial.